The primary structure comprises 105 residues: Early nodulin-93 (105 aa).

Residues 66–83 (TAQALIISTATAAAYFIV) traverse the membrane as a helical segment.

It localises to the membrane. This Glycine max (Soybean) protein is Early nodulin-93.